A 146-amino-acid polypeptide reads, in one-letter code: D-aminoacyl-tRNA deacylase (146 aa).

The Gly-cisPro motif, important for rejection of L-amino acids signature appears at 138 to 139 (GP).

It belongs to the DTD family. Homodimer.

Its subcellular location is the cytoplasm. It catalyses the reaction glycyl-tRNA(Ala) + H2O = tRNA(Ala) + glycine + H(+). The enzyme catalyses a D-aminoacyl-tRNA + H2O = a tRNA + a D-alpha-amino acid + H(+). In terms of biological role, an aminoacyl-tRNA editing enzyme that deacylates mischarged D-aminoacyl-tRNAs. Also deacylates mischarged glycyl-tRNA(Ala), protecting cells against glycine mischarging by AlaRS. Acts via tRNA-based rather than protein-based catalysis; rejects L-amino acids rather than detecting D-amino acids in the active site. By recycling D-aminoacyl-tRNA to D-amino acids and free tRNA molecules, this enzyme counteracts the toxicity associated with the formation of D-aminoacyl-tRNA entities in vivo and helps enforce protein L-homochirality. This chain is D-aminoacyl-tRNA deacylase, found in Tolumonas auensis (strain DSM 9187 / NBRC 110442 / TA 4).